The sequence spans 298 residues: N-acetylmuramic acid 6-phosphate etherase (298 aa).

One can recognise an SIS domain in the interval 55-218 (IHAQVSGGGR…STGLMIKSGK (164 aa)). E83 functions as the Proton donor in the catalytic mechanism. E114 is a catalytic residue.

It belongs to the GCKR-like family. MurNAc-6-P etherase subfamily. Homodimer.

The enzyme catalyses N-acetyl-D-muramate 6-phosphate + H2O = N-acetyl-D-glucosamine 6-phosphate + (R)-lactate. It functions in the pathway amino-sugar metabolism; 1,6-anhydro-N-acetylmuramate degradation. It participates in amino-sugar metabolism; N-acetylmuramate degradation. Its pathway is cell wall biogenesis; peptidoglycan recycling. Specifically catalyzes the cleavage of the D-lactyl ether substituent of MurNAc 6-phosphate, producing GlcNAc 6-phosphate and D-lactate. Together with AnmK, is also required for the utilization of anhydro-N-acetylmuramic acid (anhMurNAc) either imported from the medium or derived from its own cell wall murein, and thus plays a role in cell wall recycling. The chain is N-acetylmuramic acid 6-phosphate etherase from Shigella dysenteriae serotype 1 (strain Sd197).